Consider the following 196-residue polypeptide: Transcriptional regulatory protein UhpA (196 aa).

Positions 3–116 constitute a Response regulatory domain; that stretch reads TVALIDDHLI…ELIAAVHTVA (114 aa). D54 is modified (4-aspartylphosphate). Residues 131–196 enclose the HTH luxR-type domain; that stretch reads AAGRQDPLTK…ELAHRMFDGW (66 aa). A DNA-binding region (H-T-H motif) is located at residues 155 to 174; it reads VKEIAAELGLSPKTVHVHRA.

Post-translationally, phosphorylated and dephosphorylated by UhpB.

It localises to the cytoplasm. Part of the UhpABC signaling cascade that controls the expression of the hexose phosphate transporter UhpT. Activates the transcription of the uhpT gene. Acts by binding specifically to the uhpT promoter region. This Salmonella typhimurium (strain LT2 / SGSC1412 / ATCC 700720) protein is Transcriptional regulatory protein UhpA (uhpA).